The following is a 390-amino-acid chain: Bifunctional enzyme IspD/IspF (390 aa).

The 2-C-methyl-D-erythritol 4-phosphate cytidylyltransferase stretch occupies residues 1-229 (MAAGRGERAG…RQDHAVFPDI (229 aa)). A 2-C-methyl-D-erythritol 2,4-cyclodiphosphate synthase region spans residues 230 to 390 (RTGNGYDVHS…TVIYPGEVPE (161 aa)). Positions 236 and 238 each coordinate a divalent metal cation. 4-CDP-2-C-methyl-D-erythritol 2-phosphate contacts are provided by residues 236–238 (DVH) and 262–263 (HS). An a divalent metal cation-binding site is contributed by His270. Residues 284–286 (DIG), 360–363 (TTNE), Phe367, and Arg370 contribute to the 4-CDP-2-C-methyl-D-erythritol 2-phosphate site.

This sequence in the N-terminal section; belongs to the IspD/TarI cytidylyltransferase family. IspD subfamily. The protein in the C-terminal section; belongs to the IspF family. A divalent metal cation serves as cofactor.

The catalysed reaction is 2-C-methyl-D-erythritol 4-phosphate + CTP + H(+) = 4-CDP-2-C-methyl-D-erythritol + diphosphate. It carries out the reaction 4-CDP-2-C-methyl-D-erythritol 2-phosphate = 2-C-methyl-D-erythritol 2,4-cyclic diphosphate + CMP. Its pathway is isoprenoid biosynthesis; isopentenyl diphosphate biosynthesis via DXP pathway; isopentenyl diphosphate from 1-deoxy-D-xylulose 5-phosphate: step 2/6. The protein operates within isoprenoid biosynthesis; isopentenyl diphosphate biosynthesis via DXP pathway; isopentenyl diphosphate from 1-deoxy-D-xylulose 5-phosphate: step 4/6. Functionally, bifunctional enzyme that catalyzes the formation of 4-diphosphocytidyl-2-C-methyl-D-erythritol from CTP and 2-C-methyl-D-erythritol 4-phosphate (MEP) (IspD), and catalyzes the conversion of 4-diphosphocytidyl-2-C-methyl-D-erythritol 2-phosphate (CDP-ME2P) to 2-C-methyl-D-erythritol 2,4-cyclodiphosphate (ME-CPP) with a corresponding release of cytidine 5-monophosphate (CMP) (IspF). This is Bifunctional enzyme IspD/IspF from Brucella suis biovar 1 (strain 1330).